A 401-amino-acid polypeptide reads, in one-letter code: S-adenosylmethionine synthase (401 aa).

Histidine 15 serves as a coordination point for ATP. Position 17 (aspartate 17) interacts with Mg(2+). Residue glutamate 43 coordinates K(+). Residues glutamate 56 and glutamine 99 each coordinate L-methionine. A flexible loop region spans residues 99–109; the sequence is QSPEIGAGVDT. The disordered stretch occupies residues 101-132; sequence PEIGAGVDTSHEVRGSSSTDEDDRQGAGDQGL. ATP is bound by residues 174–176, aspartate 254, 260–261, alanine 277, and lysine 281; these read DGK and RK. Aspartate 254 provides a ligand contact to L-methionine. L-methionine is bound at residue lysine 285.

This sequence belongs to the AdoMet synthase family. Homotetramer; dimer of dimers. Mg(2+) is required as a cofactor. It depends on K(+) as a cofactor.

Its subcellular location is the cytoplasm. The catalysed reaction is L-methionine + ATP + H2O = S-adenosyl-L-methionine + phosphate + diphosphate. It functions in the pathway amino-acid biosynthesis; S-adenosyl-L-methionine biosynthesis; S-adenosyl-L-methionine from L-methionine: step 1/1. In terms of biological role, catalyzes the formation of S-adenosylmethionine (AdoMet) from methionine and ATP. The overall synthetic reaction is composed of two sequential steps, AdoMet formation and the subsequent tripolyphosphate hydrolysis which occurs prior to release of AdoMet from the enzyme. This Corynebacterium urealyticum (strain ATCC 43042 / DSM 7109) protein is S-adenosylmethionine synthase.